Reading from the N-terminus, the 751-residue chain is Catalase-peroxidase (751 aa).

Residues 1–21 are disordered; it reads MSNESKCPFHQTAGGGTTNRD. The segment at residues 90 to 244 is a cross-link (tryptophyl-tyrosyl-methioninium (Trp-Tyr) (with M-270)); it reads WHSAGTYRIG…LAAVQMGLIY (155 aa). Residue H91 is the Proton acceptor of the active site. The disordered stretch occupies residues 195-227; sequence YGKDQVKAQPPGQGDLVAEPAKHGEEQNRDLSA. Positions 214–227 are enriched in basic and acidic residues; that stretch reads PAKHGEEQNRDLSA. Residues 244–270 constitute a cross-link (tryptophyl-tyrosyl-methioninium (Tyr-Met) (with W-90)); that stretch reads YVNPEGPEGNPDPVASGKDIRETFGRM. H285 serves as a coordination point for heme b. Residues 364–385 form a disordered region; sequence GAHQWRPKDGKGAGTVPDAHDP.

The protein belongs to the peroxidase family. Peroxidase/catalase subfamily. Homodimer or homotetramer. Requires heme b as cofactor. In terms of processing, formation of the three residue Trp-Tyr-Met cross-link is important for the catalase, but not the peroxidase activity of the enzyme.

It catalyses the reaction H2O2 + AH2 = A + 2 H2O. The enzyme catalyses 2 H2O2 = O2 + 2 H2O. Its function is as follows. Bifunctional enzyme with both catalase and broad-spectrum peroxidase activity. The polypeptide is Catalase-peroxidase (Pseudomonas putida (strain ATCC 47054 / DSM 6125 / CFBP 8728 / NCIMB 11950 / KT2440)).